The following is a 427-amino-acid chain: G2/mitotic-specific cyclin-3 (427 aa).

Residues 1-12 (MHHNSQSLSSGH) show a composition bias toward polar residues. Disordered regions lie at residues 1 to 29 (MHHNSQSLSSGHIRSPEDENVAPIGNLKH) and 89 to 126 (SVAQRKEADHNDLLTDREQEEPVEDDGESEEDEEEDQE). Residues 89–105 (SVAQRKEADHNDLLTDR) show a composition bias toward basic and acidic residues. A compositionally biased stretch (acidic residues) spans 106–126 (EQEEPVEDDGESEEDEEEDQE).

The protein belongs to the cyclin family. Cyclin AB subfamily.

In terms of biological role, essential for the control of the cell cycle at the G2/M (mitosis) transition. Interacts with the CDC2 protein kinase to form MPF. G2/M cyclins accumulate steadily during G2 and are abruptly destroyed at mitosis. The protein is G2/mitotic-specific cyclin-3 (CLB3) of Saccharomyces cerevisiae (strain ATCC 204508 / S288c) (Baker's yeast).